A 255-amino-acid polypeptide reads, in one-letter code: Small ribosomal subunit protein eS1B (255 aa).

Ala2 carries the N-acetylalanine; partial modification. Ser245 is subject to Phosphoserine. Residue Lys248 forms a Glycyl lysine isopeptide (Lys-Gly) (interchain with G-Cter in ubiquitin) linkage. Thr254 is subject to Phosphothreonine.

This sequence belongs to the eukaryotic ribosomal protein eS1 family. In terms of assembly, component of the small ribosomal subunit. Mature ribosomes consist of a small (40S) and a large (60S) subunit. The 40S subunit contains about 33 different proteins and 1 molecule of RNA (18S). The 60S subunit contains about 49 different proteins and 3 molecules of RNA (25S, 5.8S and 5S).

Its subcellular location is the cytoplasm. The sequence is that of Small ribosomal subunit protein eS1B from Saccharomyces cerevisiae (strain JAY291) (Baker's yeast).